The primary structure comprises 298 residues: ADP/ATP translocase 1 (298 aa).

Over 1–7 (MGDQALS) the chain is Mitochondrial intermembrane. Glycine 2 carries the post-translational modification N-acetylglycine. One copy of the Solcar 1 repeat lies at 6-98 (LSFLKDFLAG…FAFKDKYKQI (93 aa)). Position 7 is a phosphoserine (serine 7). Residues 8–37 (FLKDFLAGGIAAAVSKTAVAPIERVKLLLQ) form a helical membrane-spanning segment. Topologically, residues 38 to 74 (VQHASKQISAEKQYKGIIDCVVRIPKEQGFLSFWRGN) are mitochondrial matrix. At lysine 52 the chain carries N6,N6,N6-trimethyllysine. Residues 75-99 (LANVIRYFPTQALNFAFKDKYKQIF) traverse the membrane as a helical segment. ADP is bound by residues arginine 80 and lysine 92. The Mitochondrial intermembrane segment spans residues 100–109 (LGGVDRHKQF). Residues 110-130 (WRYFAGNLASGGAAGATSLCF) traverse the membrane as a helical segment. Solcar repeat units lie at residues 111–201 (RYFA…AKGM) and 212–297 (VSWM…IKKY). Topologically, residues 131 to 178 (VYPLDFARTRLAADVGKGSSQREFNGLGDCLTKIFKSDGLKGLYQGFS) are mitochondrial matrix. At lysine 147 the chain carries N6-succinyllysine. Phosphoserine is present on residues serine 149 and serine 150. The residue at position 160 (cysteine 160) is an S-nitrosocysteine. The helical transmembrane segment at 179-199 (VSVQGIIIYRAAYFGVYDTAK) threads the bilayer. Residues 200–210 (GMLPDPKNVHI) are Mitochondrial intermembrane-facing. A helical transmembrane segment spans residues 211–231 (IVSWMIAQSVTAVAGLVSYPF). The Mitochondrial matrix portion of the chain corresponds to 232–273 (DTVRRRMMMQSGRKGADIMYTGTVDCWRKIAKDEGRKAFFKG). Position 235 (arginine 235) interacts with ADP. The interval 235–240 (RRRMMM) is important for transport activity. A Nucleotide carrier signature motif motif is present at residues 235–240 (RRRMMM). Lysine 245 and lysine 272 each carry N6-succinyllysine. Residues 274–291 (AWSNVLRGMGGAFVLVLY) traverse the membrane as a helical segment. Residues 292 to 298 (DEIKKYV) are Mitochondrial intermembrane-facing.

It belongs to the mitochondrial carrier (TC 2.A.29) family. Monomer. Found in a complex with ARL2, ARL2BP and SLC25A4/ANT1. Interacts with ARL2BP. Interacts with TIMM44; leading to inhibit the presequence translocase TIMM23, thereby promoting stabilization of PINK1. In terms of processing, under cell death induction, transglutaminated by TGM2. Transglutamination leads to formation of covalent cross-links between a glutamine and the epsilon-amino group of a lysine residue, forming polymers.

The protein resides in the mitochondrion inner membrane. The protein localises to the membrane. It catalyses the reaction ADP(in) + ATP(out) = ADP(out) + ATP(in). The enzyme catalyses H(+)(in) = H(+)(out). The matrix-open state (m-state) is inhibited by the membrane-permeable bongkrekic acid (BKA). The cytoplasmic-open state (c-state) is inhibited by the membrane-impermeable toxic inhibitor carboxyatractyloside (CATR). Proton transporter activity is inhibited by ADP:ATP antiporter activity. Its function is as follows. ADP:ATP antiporter that mediates import of ADP into the mitochondrial matrix for ATP synthesis, and export of ATP out to fuel the cell. Cycles between the cytoplasmic-open state (c-state) and the matrix-open state (m-state): operates by the alternating access mechanism with a single substrate-binding site intermittently exposed to either the cytosolic (c-state) or matrix (m-state) side of the inner mitochondrial membrane. In addition to its ADP:ATP antiporter activity, also involved in mitochondrial uncoupling and mitochondrial permeability transition pore (mPTP) activity. Plays a role in mitochondrial uncoupling by acting as a proton transporter: proton transport uncouples the proton flows via the electron transport chain and ATP synthase to reduce the efficiency of ATP production and cause mitochondrial thermogenesis. Proton transporter activity is inhibited by ADP:ATP antiporter activity, suggesting that SLC25A4/ANT1 acts as a master regulator of mitochondrial energy output by maintaining a delicate balance between ATP production (ADP:ATP antiporter activity) and thermogenesis (proton transporter activity). Proton transporter activity requires free fatty acids as cofactor, but does not transport it. Also plays a key role in mPTP opening, a non-specific pore that enables free passage of the mitochondrial membranes to solutes of up to 1.5 kDa, and which contributes to cell death. It is however unclear if SLC25A4/ANT1 constitutes a pore-forming component of mPTP or regulates it. Acts as a regulator of mitophagy independently of ADP:ATP antiporter activity: promotes mitophagy via interaction with TIMM44, leading to inhibit the presequence translocase TIMM23, thereby promoting stabilization of PINK1. The sequence is that of ADP/ATP translocase 1 from Rattus norvegicus (Rat).